A 149-amino-acid chain; its full sequence is Transcriptional repressor NrdR (149 aa).

A zinc finger spans residues 3-34 (CPFCCAVDTKVIDSRLVGEGSSVRRRRQCVVC). The ATP-cone domain occupies 49 to 139 (PRVVKSNDVR…VYRSFEDIRE (91 aa)).

This sequence belongs to the NrdR family. Requires Zn(2+) as cofactor.

Functionally, negatively regulates transcription of bacterial ribonucleotide reductase nrd genes and operons by binding to NrdR-boxes. The sequence is that of Transcriptional repressor NrdR from Erwinia tasmaniensis (strain DSM 17950 / CFBP 7177 / CIP 109463 / NCPPB 4357 / Et1/99).